Reading from the N-terminus, the 243-residue chain is Protein IN2-1 homolog A (243 aa).

The region spanning 31 to 112 (GTTRLYICYF…YIDSHFEGPA (82 aa)) is the GST N-terminal domain. Residues K70, V84, and 96–97 (ES) each bind glutathione. The GST C-terminal domain maps to 117 to 240 (DPEKRQFADE…YLLDLAKTHL (124 aa)).

This sequence belongs to the GST superfamily. HSP26 family.

This chain is Protein IN2-1 homolog A, found in Oryza sativa subsp. japonica (Rice).